A 104-amino-acid polypeptide reads, in one-letter code: Iron-sulfur cluster assembly protein CyaY (104 aa).

This sequence belongs to the frataxin family.

Functionally, involved in iron-sulfur (Fe-S) cluster assembly. May act as a regulator of Fe-S biogenesis. The polypeptide is Iron-sulfur cluster assembly protein CyaY (Vibrio vulnificus (strain CMCP6)).